The sequence spans 759 residues: Catalase-peroxidase (759 aa).

The segment at 1 to 24 (MTQDKCPFKEQSSQPNFAGGGTSN) is disordered. Positions 96–242 (WHSAGTYRVF…LAAAHMGLIY (147 aa)) form a cross-link, tryptophyl-tyrosyl-methioninium (Trp-Tyr) (with M-268). The active-site Proton acceptor is H97. A cross-link (tryptophyl-tyrosyl-methioninium (Tyr-Met) (with W-96)) is located at residues 242–268 (YVNPEGPDGNPDPVAAAHDIRDTFGRM). H283 provides a ligand contact to heme b.

The protein belongs to the peroxidase family. Peroxidase/catalase subfamily. As to quaternary structure, homodimer or homotetramer. The cofactor is heme b. Formation of the three residue Trp-Tyr-Met cross-link is important for the catalase, but not the peroxidase activity of the enzyme.

It is found in the cytoplasm. The enzyme catalyses H2O2 + AH2 = A + 2 H2O. The catalysed reaction is 2 H2O2 = O2 + 2 H2O. Bifunctional enzyme with both catalase and broad-spectrum peroxidase activity. In Aspergillus fumigatus (strain CBS 144.89 / FGSC A1163 / CEA10) (Neosartorya fumigata), this protein is Catalase-peroxidase.